Here is a 192-residue protein sequence, read N- to C-terminus: dTTP/UTP pyrophosphatase (192 aa).

Catalysis depends on D71, which acts as the Proton acceptor.

It belongs to the Maf family. YhdE subfamily. A divalent metal cation is required as a cofactor.

It is found in the cytoplasm. The catalysed reaction is dTTP + H2O = dTMP + diphosphate + H(+). It catalyses the reaction UTP + H2O = UMP + diphosphate + H(+). Functionally, nucleoside triphosphate pyrophosphatase that hydrolyzes dTTP and UTP. May have a dual role in cell division arrest and in preventing the incorporation of modified nucleotides into cellular nucleic acids. The polypeptide is dTTP/UTP pyrophosphatase (Clostridium tetani (strain Massachusetts / E88)).